The primary structure comprises 166 residues: Small ribosomal subunit protein uS5 (166 aa).

Residues 11-74 (LQEKLIAVNR…EKARRNMINV (64 aa)) enclose the S5 DRBM domain.

This sequence belongs to the universal ribosomal protein uS5 family. Part of the 30S ribosomal subunit. Contacts proteins S4 and S8.

In terms of biological role, with S4 and S12 plays an important role in translational accuracy. Functionally, located at the back of the 30S subunit body where it stabilizes the conformation of the head with respect to the body. The chain is Small ribosomal subunit protein uS5 from Haemophilus influenzae (strain 86-028NP).